Here is a 364-residue protein sequence, read N- to C-terminus: Ribosomal RNA large subunit methyltransferase F (364 aa).

The interval 1-28 (MTNKRKSAKPLEPAKRTPKLRTKKSRDL) is disordered.

Belongs to the methyltransferase superfamily. METTL16/RlmF family.

Its subcellular location is the cytoplasm. It catalyses the reaction adenosine(1618) in 23S rRNA + S-adenosyl-L-methionine = N(6)-methyladenosine(1618) in 23S rRNA + S-adenosyl-L-homocysteine + H(+). Functionally, specifically methylates the adenine in position 1618 of 23S rRNA. The protein is Ribosomal RNA large subunit methyltransferase F of Vibrio vulnificus (strain YJ016).